The following is a 260-amino-acid chain: UPF0246 protein BamMC406_2140 (260 aa).

The protein belongs to the UPF0246 family.

This Burkholderia ambifaria (strain MC40-6) protein is UPF0246 protein BamMC406_2140.